The sequence spans 530 residues: 6-phosphofructo-2-kinase/fructose-2,6-bisphosphatase 2 (530 aa).

The span at 1 to 15 (MSGASSSEQNNNSYE) shows a compositional bias: polar residues. The segment at 1 to 21 (MSGASSSEQNNNSYETKPPNL) is disordered. The residue at position 2 (Ser2) is an N-acetylserine. Positions 2-248 (SGASSSEQNN…VYYLMNIHVQ (247 aa)) are 6-phosphofructo-2-kinase. Ser29 carries the phosphoserine; by PKA modification. 45-53 (GLPARGKTY) contributes to the ATP binding site. 2 residues coordinate beta-D-fructose 6-phosphate: Arg78 and Arg102. Asp128 is a catalytic residue. Residues Thr130 and Arg136 each contribute to the beta-D-fructose 6-phosphate site. Cys158 is an active-site residue. Residue 167–172 (NILEVK) participates in ATP binding. Beta-D-fructose 6-phosphate is bound by residues Lys172, Arg193, and Tyr197. Residues 249–530 (PRTIYLCRHG…PPALASCPCH (282 aa)) are fructose-2,6-bisphosphatase. Residue Arg256 coordinates beta-D-fructose 2,6-bisphosphate. His257 functions as the Tele-phosphohistidine intermediate in the catalytic mechanism. Beta-D-fructose 2,6-bisphosphate is bound at residue Gly269. Glu326 (proton donor/acceptor) is an active-site residue. 6 residues coordinate beta-D-fructose 2,6-bisphosphate: Tyr337, Arg351, Lys355, Tyr366, Gln392, and Arg396. An ATP-binding site is contributed by 348 to 351 (FALR). Residues 392-396 (QAVMR) and Tyr428 each bind ATP. The disordered stretch occupies residues 446 to 512 (RDKPTNNFPK…GPTSRRPKSH (67 aa)). Residues 450–476 (TNNFPKNQTPVRMRRNSFTPLSSSNTI) show a composition bias toward polar residues. Ser466 is subject to Phosphoserine; by AMPK and PKA. Position 468 is a phosphothreonine (Thr468). At Thr475 the chain carries Phosphothreonine; by PKC. Residues Ser483 and Ser493 each carry the phosphoserine modification.

It in the C-terminal section; belongs to the phosphoglycerate mutase family. Homodimer. Forms a heterodimer with PFKFB3. Post-translationally, phosphorylation by AMPK stimulates activity.

The enzyme catalyses beta-D-fructose 2,6-bisphosphate + H2O = beta-D-fructose 6-phosphate + phosphate. The catalysed reaction is beta-D-fructose 6-phosphate + ATP = beta-D-fructose 2,6-bisphosphate + ADP + H(+). With respect to regulation, phosphorylation results in the activation of the kinase activity. Functionally, synthesis and degradation of fructose 2,6-bisphosphate. The chain is 6-phosphofructo-2-kinase/fructose-2,6-bisphosphatase 2 (PFKFB2) from Pongo abelii (Sumatran orangutan).